The primary structure comprises 177 residues: Ribosome maturation factor RimP (177 aa).

The span at 153–171 (VEFNRKDTKNDNQTEHDNK) shows a compositional bias: basic and acidic residues. Positions 153–177 (VEFNRKDTKNDNQTEHDNKTEEEEA) are disordered.

The protein belongs to the RimP family.

It localises to the cytoplasm. In terms of biological role, required for maturation of 30S ribosomal subunits. In Streptomyces coelicolor (strain ATCC BAA-471 / A3(2) / M145), this protein is Ribosome maturation factor RimP.